Consider the following 216-residue polypeptide: UPF0502 protein PFL_4004 (216 aa).

Belongs to the UPF0502 family.

This is UPF0502 protein PFL_4004 from Pseudomonas fluorescens (strain ATCC BAA-477 / NRRL B-23932 / Pf-5).